The sequence spans 197 residues: Imidazoleglycerol-phosphate dehydratase (197 aa).

Belongs to the imidazoleglycerol-phosphate dehydratase family.

Its subcellular location is the cytoplasm. The enzyme catalyses D-erythro-1-(imidazol-4-yl)glycerol 3-phosphate = 3-(imidazol-4-yl)-2-oxopropyl phosphate + H2O. It functions in the pathway amino-acid biosynthesis; L-histidine biosynthesis; L-histidine from 5-phospho-alpha-D-ribose 1-diphosphate: step 6/9. This Nitrobacter hamburgensis (strain DSM 10229 / NCIMB 13809 / X14) protein is Imidazoleglycerol-phosphate dehydratase.